An 85-amino-acid polypeptide reads, in one-letter code: Small ribosomal subunit protein bS18c (85 aa).

This sequence belongs to the bacterial ribosomal protein bS18 family. As to quaternary structure, part of the 30S ribosomal subunit.

The protein resides in the plastid. Its subcellular location is the chloroplast. This chain is Small ribosomal subunit protein bS18c, found in Zygnema circumcarinatum (Green alga).